Reading from the N-terminus, the 852-residue chain is Taste receptor type 1 member 3 (852 aa).

The signal sequence occupies residues 1-20 (MLGPAVLGLSLWALLQPGAG). Topologically, residues 21 to 570 (APLCLSQQLR…FLAWGEPAVL (550 aa)) are extracellular. N-linked (GlcNAc...) asparagine glycans are attached at residues Asn-85, Asn-130, Asn-264, Asn-285, Asn-380, Asn-411, Asn-432, and Asn-475. A helical membrane pass occupies residues 571 to 591 (LLLLLLSLALGLVLAALGLFV). The Cytoplasmic segment spans residues 592 to 603 (HHRDSPLVQASG). The helical transmembrane segment at 604 to 624 (GPLACFGLVCLGLVCLSVLLF) threads the bilayer. Topologically, residues 625–639 (PGQPSPAQCLAQQPL) are extracellular. The helical transmembrane segment at 640–660 (SHLPLTGCLSTLFLQAAEIFV) threads the bilayer. The Cytoplasmic segment spans residues 661–682 (ESELPLSWADRLSGCLRGPWAW). A helical transmembrane segment spans residues 683-703 (LVVLLAMLVEVALCTWYLVAF). At 704-729 (PPEVVTDWHMLPTEALVHCRTRSWVS) the chain is on the extracellular side. The helical transmembrane segment at 730–750 (FGLAHATNATLAFLCFLGTFL) threads the bilayer. The Cytoplasmic portion of the chain corresponds to 751 to 762 (VRSQPGRYNRAR). The helical transmembrane segment at 763–783 (GLTFAMLAYFITWVSFVPLLA) threads the bilayer. The Extracellular portion of the chain corresponds to 784-791 (NVQVVLRP). Residues 792-812 (AVQMGALLLCVLGILAAFHLP) form a helical membrane-spanning segment. The Cytoplasmic segment spans residues 813–852 (RCYLLIRQPGLNTPEFFLGGGPGDAQGRNDGDTGNQGKHE). Residues 833-852 (GPGDAQGRNDGDTGNQGKHE) form a disordered region. Positions 839 to 852 (GRNDGDTGNQGKHE) are enriched in basic and acidic residues.

It belongs to the G-protein coupled receptor 3 family. TAS1R subfamily. In terms of assembly, forms homodimers or heterodimers with TAS1R1 and TAS1R2.

It localises to the cell membrane. In terms of biological role, putative taste receptor. TAS1R1/TAS1R3 responds to the umami taste stimulus (the taste of monosodium glutamate). TAS1R2/TAS1R3 recognizes diverse natural and synthetic sweeteners. TAS1R3 is essential for the recognition and response to the disaccharide trehalose. Sequence differences within and between species can significantly influence the selectivity and specificity of taste responses. This Gorilla gorilla gorilla (Western lowland gorilla) protein is Taste receptor type 1 member 3 (TAS1R3).